A 368-amino-acid chain; its full sequence is (Iso)eugenol O-methyltransferase (368 aa).

Residues 1–2 (MG) constitute a propeptide that is removed on maturation. S-adenosyl-L-methionine is bound by residues Ser187, 211–212 (GG), Asp234, 254–255 (DM), and Lys268. His272 acts as the Proton acceptor in catalysis.

The protein belongs to the class I-like SAM-binding methyltransferase superfamily. Cation-independent O-methyltransferase family. COMT subfamily. As to quaternary structure, homodimer. As to expression, expressed in petals, style and stamens, but not in stigma, sepals, leaves or stem tissues.

It carries out the reaction (E)-isoeugenol + S-adenosyl-L-methionine = (E)-isomethyleugenol + S-adenosyl-L-homocysteine + H(+). In terms of biological role, catalyzes the methylation of the para-4-hydroxyl of both eugenol and (iso)eugenol to methyleugenol and isomethyleugenol, respectively. The resulting products are part of a complex mixture of low-molecular-weight volatile compounds emitted by the flowers to attract pollinators. This is (Iso)eugenol O-methyltransferase (IEMT1) from Clarkia breweri (Fairy fans).